The chain runs to 263 residues: uncharacterized protein (263 aa).

16–23 (AKGGTGKT) contributes to the ATP binding site.

This sequence to M.jannaschii MJ0547 and MJ0169.

This is an uncharacterized protein from Methanocaldococcus jannaschii (strain ATCC 43067 / DSM 2661 / JAL-1 / JCM 10045 / NBRC 100440) (Methanococcus jannaschii).